A 102-amino-acid chain; its full sequence is uncharacterized protein (102 aa).

This is an uncharacterized protein from Sulfolobus spindle-shape virus 1 (SSV1).